The primary structure comprises 793 residues: Potassium transporter 18 (793 aa).

Residues 1-53 (METRTNEYSRKGAMWELERNLDQPMDAEAGRLRNMYREKTYPTILLLRLAFQS) are Cytoplasmic-facing. A helical membrane pass occupies residues 54–74 (LGVVFGDLGTSPLYVFYNIFP). Residues 75–86 (HGIEDTEQVIGA) lie on the Extracellular side of the membrane. The chain crosses the membrane as a helical span at residues 87-107 (LSLIIYSLTLIPLVKYVFIVL). The Cytoplasmic portion of the chain corresponds to 108 to 172 (RANDNGQGGT…WLEGHQFRKN (65 aa)). Residues 173–193 (LILILVLFGTCMAVGDGILTP) form a helical membrane-spanning segment. Residues 194–214 (AISVLSATGGIQVEEGRMRND) lie on the Extracellular side of the membrane. Residues 215 to 235 (VVVIISVLILIGLFSMQHYGT) form a helical membrane-spanning segment. Over 236–237 (DK) the chain is Cytoplasmic. A helical membrane pass occupies residues 238–258 (VSWLFAPIVFVWFILIGILGA). The Extracellular segment spans residues 259-287 (VNICKYDHSVLKAFNPVYVYRYFKRGKTS). Residues 288-308 (WTSLGGIMLSITGTEALFADL) traverse the membrane as a helical segment. A topological domain (cytoplasmic) is located at residue S309. The chain crosses the membrane as a helical span at residues 310–330 (YFPVQAIQIAFTVVVFPCLLL). Residues 331–351 (QYTGQAAFIAANTNQVSHAFY) are Extracellular-facing. Residues 352–372 (ISLPAPILWPAFAVATAAAIV) traverse the membrane as a helical segment. The Cytoplasmic segment spans residues 373-409 (ASQATISATYSIIKQALALGCFPRVKIIHTSKKYLGQ). Residues 410 to 430 (IYSPDINWILMVFCIAVTAGF) form a helical membrane-spanning segment. At 431 to 442 (KNQSQIANAYGT) the chain is on the extracellular side. N-linked (GlcNAc...) asparagine glycosylation occurs at N432. Residues 443 to 463 (AVIMVMLVTTFLMIPIMLLVW) form a helical membrane-spanning segment. The Cytoplasmic portion of the chain corresponds to 464–468 (RSHWT). Residues 469–489 (LVVAFTVLSLLVEIPYFSAVV) traverse the membrane as a helical segment. Residues 490 to 494 (RKIDQ) are Extracellular-facing. A helical membrane pass occupies residues 495-515 (GGWVPLVFAAGFMIIMYVWHY). Topologically, residues 516-793 (GTLKRYEFEM…MLNVGQVFYV (278 aa)) are cytoplasmic.

It belongs to the HAK/KUP transporter (TC 2.A.72.3) family.

The protein resides in the membrane. Functionally, high-affinity potassium transporter. The sequence is that of Potassium transporter 18 (HAK18) from Oryza sativa subsp. japonica (Rice).